Consider the following 215-residue polypeptide: 24 kDa Ras-like protein (215 aa).

17 to 24 (GGGGVGKS) contributes to the GTP binding site. The Effector region signature appears at 39 to 47 (YDPTIEDSY). Residues 64–68 (DTAGQ) and 123–126 (NKCD) each bind GTP. The tract at residues 179 to 199 (QTGRPAIAAGGGGPAGSYTQD) is disordered. Cys-212 is subject to Cysteine methyl ester. The S-farnesyl cysteine moiety is linked to residue Cys-212. Residues 213–215 (VIA) constitute a propeptide, removed in mature form.

Belongs to the small GTPase superfamily. Ras family.

The protein resides in the cell membrane. The catalysed reaction is GTP + H2O = GDP + phosphate + H(+). Its function is as follows. Ras proteins bind GDP/GTP and possess intrinsic GTPase activity. The polypeptide is 24 kDa Ras-like protein (CC-RAS) (Coprinopsis cinerea (strain Okayama-7 / 130 / ATCC MYA-4618 / FGSC 9003) (Inky cap fungus)).